The primary structure comprises 531 residues: Lysine--tRNA ligase, mitochondrial (531 aa).

The transit peptide at 1–18 (MISRGLLSKGILSIIKRK) directs the protein to the mitochondrion.

Belongs to the class-II aminoacyl-tRNA synthetase family.

It is found in the mitochondrion. It catalyses the reaction tRNA(Lys) + L-lysine + ATP = L-lysyl-tRNA(Lys) + AMP + diphosphate. The sequence is that of Lysine--tRNA ligase, mitochondrial (msk1) from Schizosaccharomyces pombe (strain 972 / ATCC 24843) (Fission yeast).